Reading from the N-terminus, the 312-residue chain is Glycerol-3-phosphate dehydrogenase [NAD(P)+] (312 aa).

The NADPH site is built by Trp11, Arg30, Arg31, and Lys95. Sn-glycerol 3-phosphate contacts are provided by Lys95, Gly123, and Ser125. Residue Ala127 participates in NADPH binding. Sn-glycerol 3-phosphate is bound by residues Lys177, Asp230, Ser240, Arg241, and Asn242. Catalysis depends on Lys177, which acts as the Proton acceptor. Arg241 provides a ligand contact to NADPH. NADPH contacts are provided by Val265 and Glu267.

This sequence belongs to the NAD-dependent glycerol-3-phosphate dehydrogenase family.

It is found in the cytoplasm. The catalysed reaction is sn-glycerol 3-phosphate + NAD(+) = dihydroxyacetone phosphate + NADH + H(+). It carries out the reaction sn-glycerol 3-phosphate + NADP(+) = dihydroxyacetone phosphate + NADPH + H(+). The protein operates within membrane lipid metabolism; glycerophospholipid metabolism. Functionally, catalyzes the reduction of the glycolytic intermediate dihydroxyacetone phosphate (DHAP) to sn-glycerol 3-phosphate (G3P), the key precursor for phospholipid synthesis. The sequence is that of Glycerol-3-phosphate dehydrogenase [NAD(P)+] from Helicobacter pylori (strain HPAG1).